Here is a 619-residue protein sequence, read N- to C-terminus: Zinc finger protein 131 (619 aa).

Positions 34-98 (TDITLIVDGH…TYTAKLMIQG (65 aa)) constitute a BTB domain. A Nuclear localization signal 1 motif is present at residues 137–148 (TGKNEAKKRKIA). Residue S231 is modified to Phosphoserine. 3 C2H2-type zinc fingers span residues 261–283 (FHCEKCNRSFKLFYHFKEHMKSH), 288–311 (FKCEICNKRYLRESAWKQHLNCYH), and 328–350 (HICQYCDKQFDHFGHFKEHLRKH). Glycyl lysine isopeptide (Lys-Gly) (interchain with G-Cter in SUMO2) cross-links involve residues K289 and K295. The short motif at 317 to 328 (VSKKQRTGKKIH) is the Nuclear localization signal 2 element. The C2H2-type 4; degenerate zinc-finger motif lies at 356–381 (FECSNCHERFARNSTLKCHLTACQTG). C2H2-type zinc fingers lie at residues 392–414 (YECQVCNSVFNSWDQFKDHLVIH) and 420–443 (NHCTLCDLWFMQGNELRRHLSDAH). 2 stretches are compositionally biased toward basic and acidic residues: residues 574 to 587 (QEEREPNHADAAME) and 595 to 612 (LETKPSEYSQARKTENDR). Positions 574 to 619 (QEEREPNHADAAMEEHEDAEGLETKPSEYSQARKTENDRTSLPVLE) are disordered. K598 participates in a covalent cross-link: Glycyl lysine isopeptide (Lys-Gly) (interchain with G-Cter in SUMO).

This sequence belongs to the krueppel C2H2-type zinc-finger protein family. Post-translationally, monosumoylated at Lys-598 by CBX4 and UHRF2. Sumoylation may potentiate ZNF131 inhibition of estrogen signaling. Sumoylation does not interfere with ubiquitination. Ubiquitinated. As to expression, ubiquitously expressed. Predominant expression is found in the developing central nervous system with strongest signals in the forebrain, midbrain, and hindbrain areas and in the neural tube.

It localises to the nucleus. May be involved in transcriptional regulation as a repressor of ESR1/ER-alpha signaling. Plays a role during development and organogenesis as well as in the function of the adult central nervous system. The chain is Zinc finger protein 131 (Znf131) from Mus musculus (Mouse).